A 632-amino-acid chain; its full sequence is Chaperone protein HtpG (632 aa).

The segment at 1–345 (MTTAAHAETL…SKDLSLNVSR (345 aa)) is a; substrate-binding. The b stretch occupies residues 346-561 (ELLQKDPQVD…EHDMGYQMRR (216 aa)). A c region spans residues 562–632 (LMEAAGQPLP…VQRLNKLLSH (71 aa)).

It belongs to the heat shock protein 90 family. As to quaternary structure, homodimer.

The protein localises to the cytoplasm. Functionally, molecular chaperone. Has ATPase activity. The sequence is that of Chaperone protein HtpG from Chromohalobacter salexigens (strain ATCC BAA-138 / DSM 3043 / CIP 106854 / NCIMB 13768 / 1H11).